The primary structure comprises 335 residues: Ketol-acid reductoisomerase (NADP(+)) (335 aa).

The 181-residue stretch at 5-185 folds into the KARI N-terminal Rossmann domain; sequence SKIYTDKDSN…GATRAGVIPT (181 aa). NADP(+) contacts are provided by residues 28 to 31, S56, and 86 to 89; these read YGSQ and DMVQ. H111 is an active-site residue. G137 serves as a coordination point for NADP(+). The 146-residue stretch at 186–331 folds into the KARI C-terminal knotted domain; that stretch reads TFKEETETDL…NQLKDLIQKG (146 aa). Mg(2+)-binding residues include D194, E198, E230, and E234. Residue S255 participates in substrate binding.

It belongs to the ketol-acid reductoisomerase family. The cofactor is Mg(2+).

The catalysed reaction is (2R)-2,3-dihydroxy-3-methylbutanoate + NADP(+) = (2S)-2-acetolactate + NADPH + H(+). The enzyme catalyses (2R,3R)-2,3-dihydroxy-3-methylpentanoate + NADP(+) = (S)-2-ethyl-2-hydroxy-3-oxobutanoate + NADPH + H(+). The protein operates within amino-acid biosynthesis; L-isoleucine biosynthesis; L-isoleucine from 2-oxobutanoate: step 2/4. It participates in amino-acid biosynthesis; L-valine biosynthesis; L-valine from pyruvate: step 2/4. Involved in the biosynthesis of branched-chain amino acids (BCAA). Catalyzes an alkyl-migration followed by a ketol-acid reduction of (S)-2-acetolactate (S2AL) to yield (R)-2,3-dihydroxy-isovalerate. In the isomerase reaction, S2AL is rearranged via a Mg-dependent methyl migration to produce 3-hydroxy-3-methyl-2-ketobutyrate (HMKB). In the reductase reaction, this 2-ketoacid undergoes a metal-dependent reduction by NADPH to yield (R)-2,3-dihydroxy-isovalerate. In Saccharolobus islandicus (strain Y.G.57.14 / Yellowstone #1) (Sulfolobus islandicus), this protein is Ketol-acid reductoisomerase (NADP(+)).